Reading from the N-terminus, the 464-residue chain is tRNA-2-methylthio-N(6)-dimethylallyladenosine synthase (464 aa).

Residues 19–135 enclose the MTTase N-terminal domain; the sequence is GSYWITTFGC…LENLLGKVDL (117 aa). [4Fe-4S] cluster-binding residues include Cys-28, Cys-64, Cys-98, Cys-170, Cys-174, and Cys-177. Residues 156–394 form the Radical SAM core domain; sequence RESSICGWVN…DLVEKTARSR (239 aa). Positions 396–464 constitute a TRAM domain; the sequence is QRYIDNIESV…PFSLTGELSL (69 aa).

It belongs to the methylthiotransferase family. MiaB subfamily. As to quaternary structure, monomer. [4Fe-4S] cluster is required as a cofactor.

It is found in the cytoplasm. It catalyses the reaction N(6)-dimethylallyladenosine(37) in tRNA + (sulfur carrier)-SH + AH2 + 2 S-adenosyl-L-methionine = 2-methylsulfanyl-N(6)-dimethylallyladenosine(37) in tRNA + (sulfur carrier)-H + 5'-deoxyadenosine + L-methionine + A + S-adenosyl-L-homocysteine + 2 H(+). In terms of biological role, catalyzes the methylthiolation of N6-(dimethylallyl)adenosine (i(6)A), leading to the formation of 2-methylthio-N6-(dimethylallyl)adenosine (ms(2)i(6)A) at position 37 in tRNAs that read codons beginning with uridine. This Prochlorococcus marinus (strain MIT 9301) protein is tRNA-2-methylthio-N(6)-dimethylallyladenosine synthase.